The sequence spans 441 residues: Protein FAM83A (441 aa).

Disordered regions lie at residues 81 to 108 (SNDN…MNSD) and 312 to 368 (GMSI…SPLQ). The segment covering 314–327 (SIMSDSNPESINTT) has biased composition (polar residues). Positions 328 to 354 (SEPFSSISTASISNDSQRPKSPVSTTP) are enriched in low complexity.

Belongs to the FAM83 family.

It is found in the cytoplasm. May function in the epidermal growth factor receptor/EGFR signaling pathway. This is Protein FAM83A from Xenopus tropicalis (Western clawed frog).